The sequence spans 474 residues: tRNA-2-methylthio-N(6)-dimethylallyladenosine synthase (474 aa).

The region spanning 3-120 (KKLHIKTWGC…LPEMINSVRG (118 aa)) is the MTTase N-terminal domain. Residues Cys12, Cys49, Cys83, Cys157, Cys161, and Cys164 each contribute to the [4Fe-4S] cluster site. Residues 143–375 (RAEGPTAFVS…QERINQQAMA (233 aa)) enclose the Radical SAM core domain. In terms of domain architecture, TRAM spans 378–441 (RRMLGSTQRI…PNSLRGKVVR (64 aa)).

Belongs to the methylthiotransferase family. MiaB subfamily. In terms of assembly, monomer. Requires [4Fe-4S] cluster as cofactor.

The protein resides in the cytoplasm. The enzyme catalyses N(6)-dimethylallyladenosine(37) in tRNA + (sulfur carrier)-SH + AH2 + 2 S-adenosyl-L-methionine = 2-methylsulfanyl-N(6)-dimethylallyladenosine(37) in tRNA + (sulfur carrier)-H + 5'-deoxyadenosine + L-methionine + A + S-adenosyl-L-homocysteine + 2 H(+). Functionally, catalyzes the methylthiolation of N6-(dimethylallyl)adenosine (i(6)A), leading to the formation of 2-methylthio-N6-(dimethylallyl)adenosine (ms(2)i(6)A) at position 37 in tRNAs that read codons beginning with uridine. The polypeptide is tRNA-2-methylthio-N(6)-dimethylallyladenosine synthase (Salmonella arizonae (strain ATCC BAA-731 / CDC346-86 / RSK2980)).